Consider the following 409-residue polypeptide: MSSHPIQVFSEIGKLKKVMLHRPGKELENLLPDYLERLLFDDIPFLEDAQKEHDAFAQALRDEGIEVLYLEQLAAESLTSPEIRDQFIEEYLDEANIRDRQTKVAIRELLHGIKDNQELVEKTMAGIQKVELPEIPDEAKDLTDLVESEYPFAIDPMPNLYFTRDPFATIGNAVSLNHMFADTRNRETLYGKYIFKYHPVYGGKVDLVYNREEDTRIEGGDELVLSKDVLAVGISQRTDAASIEKLLVNIFKKNVGFKKVLAFEFANNRKFMHLDTVFTMVDYDKFTIHPEIEGDLHVYSVTYENEKLKIVEEKGDLAELLAQNLGVEKVHLIRCGGGNIVAAAREQWNDGSNTLTIAPGVVVVYDRNTVTNKILEEYGLRLIKIRGSELVRGRGGPRCMSMPFEREEV.

Cys399 serves as the catalytic Amidino-cysteine intermediate.

It belongs to the arginine deiminase family.

It localises to the cytoplasm. The catalysed reaction is L-arginine + H2O = L-citrulline + NH4(+). The protein operates within amino-acid degradation; L-arginine degradation via ADI pathway; carbamoyl phosphate from L-arginine: step 1/2. This is Arginine deiminase from Streptococcus pneumoniae serotype 19F (strain G54).